The sequence spans 202 residues: LexA repressor (202 aa).

Residues 28–48 (RAEIAQELGFKSPNAAEEHLK) constitute a DNA-binding region (H-T-H motif). Residues Ser-123 and Lys-160 each act as for autocatalytic cleavage activity in the active site.

The protein belongs to the peptidase S24 family. As to quaternary structure, homodimer.

The enzyme catalyses Hydrolysis of Ala-|-Gly bond in repressor LexA.. Represses a number of genes involved in the response to DNA damage (SOS response), including recA and lexA. In the presence of single-stranded DNA, RecA interacts with LexA causing an autocatalytic cleavage which disrupts the DNA-binding part of LexA, leading to derepression of the SOS regulon and eventually DNA repair. The protein is LexA repressor of Pseudomonas putida (Arthrobacter siderocapsulatus).